The chain runs to 294 residues: Protoheme IX farnesyltransferase (294 aa).

9 helical membrane passes run Val-24 to Val-44, Leu-48 to His-68, Ala-96 to Asn-116, Leu-118 to Leu-138, Asn-145 to Thr-165, Ala-172 to Ile-192, Val-224 to Leu-244, Leu-245 to Asp-265, and Val-268 to Leu-288.

This sequence belongs to the UbiA prenyltransferase family. Protoheme IX farnesyltransferase subfamily.

It localises to the cell inner membrane. The catalysed reaction is heme b + (2E,6E)-farnesyl diphosphate + H2O = Fe(II)-heme o + diphosphate. It participates in porphyrin-containing compound metabolism; heme O biosynthesis; heme O from protoheme: step 1/1. Converts heme B (protoheme IX) to heme O by substitution of the vinyl group on carbon 2 of heme B porphyrin ring with a hydroxyethyl farnesyl side group. The chain is Protoheme IX farnesyltransferase from Legionella pneumophila (strain Corby).